Here is a 171-residue protein sequence, read N- to C-terminus: Dual specificity protein phosphatase OPG106 (171 aa).

A dimerization region spans residues 1-27 (MDKKSLYKYLLLRSTGDMHKAKSPTIM). The Tyrosine-protein phosphatase domain maps to 23–171 (SPTIMTRVTN…IIEKYVIDKN (149 aa)). The active-site Phosphocysteine intermediate is Cys-110.

It belongs to the protein-tyrosine phosphatase family. Non-receptor class dual specificity subfamily. As to quaternary structure, homodimer.

The protein resides in the virion. Its subcellular location is the host cytoplasm. It catalyses the reaction O-phospho-L-tyrosyl-[protein] + H2O = L-tyrosyl-[protein] + phosphate. It carries out the reaction O-phospho-L-seryl-[protein] + H2O = L-seryl-[protein] + phosphate. In terms of biological role, serine/tyrosine phosphatase which down-regulates cellular antiviral response by dephosphorylating activated host STAT1 and blocking interferon (IFN)-stimulated innate immune responses. Dephosphorylates the OPG144 protein. The sequence is that of Dual specificity protein phosphatase OPG106 (OPG106) from Bos taurus (Bovine).